A 500-amino-acid polypeptide reads, in one-letter code: Probable cytosol aminopeptidase (500 aa).

Mn(2+) contacts are provided by K264 and D269. Residue K276 is part of the active site. The Mn(2+) site is built by D287, D346, and E348. R350 is an active-site residue.

This sequence belongs to the peptidase M17 family. Mn(2+) serves as cofactor.

It is found in the cytoplasm. The enzyme catalyses Release of an N-terminal amino acid, Xaa-|-Yaa-, in which Xaa is preferably Leu, but may be other amino acids including Pro although not Arg or Lys, and Yaa may be Pro. Amino acid amides and methyl esters are also readily hydrolyzed, but rates on arylamides are exceedingly low.. The catalysed reaction is Release of an N-terminal amino acid, preferentially leucine, but not glutamic or aspartic acids.. In terms of biological role, presumably involved in the processing and regular turnover of intracellular proteins. Catalyzes the removal of unsubstituted N-terminal amino acids from various peptides. The chain is Probable cytosol aminopeptidase from Rhodopseudomonas palustris (strain BisB5).